A 208-amino-acid polypeptide reads, in one-letter code: MRKIRTKICGITTPEDALYAAHAGADALGLVFYPQSPRAVDIIKAQKITAALPPFVSVVALFVNESAQNIRRILAEVPIHIIQFHGDEDDAFCRQFHRPYIKAIRVQTASDIRNAADRFPDAQALLFDAYHPSEYGGTGHRFDWTLLAEYSGKPWVLAGGLTPENVDEAIRITGAEAVDVSGGVEASKGKKDPAKVAAFIATANRLSR.

It belongs to the TrpF family.

It catalyses the reaction N-(5-phospho-beta-D-ribosyl)anthranilate = 1-(2-carboxyphenylamino)-1-deoxy-D-ribulose 5-phosphate. The protein operates within amino-acid biosynthesis; L-tryptophan biosynthesis; L-tryptophan from chorismate: step 3/5. This chain is N-(5'-phosphoribosyl)anthranilate isomerase, found in Neisseria meningitidis serogroup A / serotype 4A (strain DSM 15465 / Z2491).